We begin with the raw amino-acid sequence, 342 residues long: Isopentenyl-diphosphate delta-isomerase (342 aa).

A substrate-binding site is contributed by 11–12 (RK). Residues S68, 69 to 71 (SMT), S99, and N128 each bind FMN. 99-101 (SQR) contacts substrate. Residue Q162 participates in substrate binding. E163 provides a ligand contact to Mg(2+). FMN contacts are provided by residues K194, S219, T224, 275-277 (GVR), and 296-297 (AK).

The protein belongs to the IPP isomerase type 2 family. As to quaternary structure, homooctamer. Dimer of tetramers. FMN is required as a cofactor. Requires NADPH as cofactor. Mg(2+) serves as cofactor.

The protein resides in the cytoplasm. It catalyses the reaction isopentenyl diphosphate = dimethylallyl diphosphate. In terms of biological role, involved in the biosynthesis of isoprenoids. Catalyzes the 1,3-allylic rearrangement of the homoallylic substrate isopentenyl (IPP) to its allylic isomer, dimethylallyl diphosphate (DMAPP). This chain is Isopentenyl-diphosphate delta-isomerase, found in Legionella pneumophila (strain Corby).